Consider the following 364-residue polypeptide: D-alanine--D-alanine ligase (364 aa).

In terms of domain architecture, ATP-grasp spans 146 to 352 (KLCAADAGVE…FDELISRLLL (207 aa)). 179-234 (TERFAFPVFVKPANLGSSVGISKVHNAAELRPALDKACALDAKVLVEETITGREVE) is an ATP binding site. Mg(2+) contacts are provided by Asp305, Glu319, and Asn321.

This sequence belongs to the D-alanine--D-alanine ligase family. The cofactor is Mg(2+). Mn(2+) is required as a cofactor.

Its subcellular location is the cytoplasm. The catalysed reaction is 2 D-alanine + ATP = D-alanyl-D-alanine + ADP + phosphate + H(+). It participates in cell wall biogenesis; peptidoglycan biosynthesis. In terms of biological role, cell wall formation. The chain is D-alanine--D-alanine ligase from Chlorobaculum parvum (strain DSM 263 / NCIMB 8327) (Chlorobium vibrioforme subsp. thiosulfatophilum).